The primary structure comprises 356 residues: Neutral protease 2 homolog UREG_03761 (356 aa).

The N-terminal stretch at Met1 to Ala19 is a signal peptide. A propeptide spanning residues Phe20–Arg181 is cleaved from the precursor. Cystine bridges form between Cys189/Cys259 and Cys266/Cys284. Zn(2+) is bound at residue His308. Residue Glu309 is part of the active site. Zn(2+) contacts are provided by His312 and Asp323.

Belongs to the peptidase M35 family. The cofactor is Zn(2+).

Its subcellular location is the secreted. It catalyses the reaction Preferential cleavage of bonds with hydrophobic residues in P1'. Also 3-Asn-|-Gln-4 and 8-Gly-|-Ser-9 bonds in insulin B chain.. Functionally, secreted metalloproteinase that allows assimilation of proteinaceous substrates. Shows high activities on basic nuclear substrates such as histone and protamine. The polypeptide is Neutral protease 2 homolog UREG_03761 (Uncinocarpus reesii (strain UAMH 1704)).